Consider the following 1551-residue polypeptide: MGFCLALAWTLLVGAWTPLGAQNPISWEVQRFDGWYNNLMEHRWGSKGSRLQRLVPASYADGVYQPLGEPHLPNPRDLSNTISRGPAGLASLRNRTVLGVFFGYHVLSDLVSVETPGCPAEFLNIRIPPGDPMFDPDQRGDVVLPFQRSRWDPETGRSPSNPRDPANQVTGWLDGSAIYGSSHSWSDALRSFSRGQLASGPDPAFPRDSQNPLLMWAAPDPATGQNGPRGLYAFGAERGNREPFLQALGLLWFRYHNLWAQRLARQHPDWEDEELFQHARKRVIATYQNIAVYEWLPSFLQKTLPEYTGYRPFLDPSISSEFVAASEQFLSTMVPPGVYMRNASCHFQGVINRNSSVSRALRVCNSYWSREHPSLQSAEDVDALLLGMASQIAEREDHVLVEDVRDFWPGPLKFSRTDHLASCLQRGRDLGLPSYTKARAALGLSPITRWQDINPALSRSNDTVLEATAALYNQDLSWLELLPGGLLESHRDPGPLFSTIVLEQFVRLRDGDRYWFENTRNGLFSKKEIEEIRNTTLQDVLVAVINIDPSALQPNVFVWHKGDPCPQPRQLSTEGLPACAPSVVRDYFEGSGFGFGVTIGTLCCFPLVSLLSAWIVARLRMRNFKRLQGQDRQSIVSEKLVGGMEALEWQGHKEPCRPVLVYLQPGQIRVVDGRLTVLRTIQLQPPQKVNFVLSSNRGRRTLLLKIPKEYDLVLLFNLEEERQALVENLRGALKESGLSIQEWELREQELMRAAVTREQRRHLLETFFRHLFSQVLDINQADAGTLPLDSSQKVREALTCELSRAEFAESLGLKPQDMFVESMFSLADKDGNGYLSFREFLDILVVFMKGSPEEKSRLMFRMYDFDGNGLISKDEFIRMLRSFIEISNNCLSKAQLAEVVESMFRESGFQDKEELTWEDFHFMLRDHNSELRFTQLCVKGVEVPEVIKDLCRRASYISQDMICPSPRVSARCSRSDIETELTPQRLQCPMDTDPPQEIRRRFGKKVTSFQPLLFTEAHREKFQRSCLHQTVQQFKRFIENYRRHIGCVAVFYAIAGGLFLERAYYYAFAAHHTGITDTTRVGIILSRGTAASISFMFSYILLTMCRNLITFLRETFLNRYVPFDAAVDFHRLIASTAIVLTVLHSVGHVVNVYLFSISPLSVLSCLFPGLFHDDGSELPQKYYWWFFQTVPGLTGVVLLLILAIMYVFASHHFRRRSFRGFWLTHHLYILLYVLLIIHGSFALIQLPRFHIFFLVPAIIYGGDKLVSLSRKKVEISVVKAELLPSGVTHLRFQRPQGFEYKSGQWVRIACLALGTTEYHPFTLTSAPHEDTLSLHIRAAGPWTTRLREIYSAPTGDRCARYPKLYLDGPFGEGHQEWHKFEVSVLVGGGIGVTPFASILKDLVFKSSVSCQVFCKKIYFIWVTRTQRQFEWLADIIREVEENDHQDLVSVHIYITQLAEKFDLRTTMLYICERHFQKVLNRSLFTGLRSITHFGRPPFEPFFNSLQEVHPQVRKIGVFSCGPPGMTKNVEKACQLINRQDRTHFSHHYENF.

An N-terminal signal peptide occupies residues 1-21 (MGFCLALAWTLLVGAWTPLGA). Topologically, residues 22-596 (QNPISWEVQR…YFEGSGFGFG (575 aa)) are extracellular. The tract at residues 26-593 (SWEVQRFDGW…VRDYFEGSGF (568 aa)) is peroxidase-like; mediates peroxidase activity. Residue asparagine 94 is glycosylated (N-linked (GlcNAc...) asparagine). The interval 150–172 (RWDPETGRSPSNPRDPANQVTGW) is disordered. 4 N-linked (GlcNAc...) asparagine glycosylation sites follow: asparagine 342, asparagine 354, asparagine 461, and asparagine 534. Residues 597 to 617 (VTIGTLCCFPLVSLLSAWIVA) traverse the membrane as a helical segment. Over 618–1044 (RLRMRNFKRL…KRFIENYRRH (427 aa)) the chain is Cytoplasmic. EF-hand domains lie at 815–850 (PQDMFVESMFSLADKDGNGYLSFREFLDILVVFMKG), 851–886 (SPEEKSRLMFRMYDFDGNGLISKDEFIRMLRSFIEI), and 895–930 (QLAEVVESMFRESGFQDKEELTWEDFHFMLRDHNSE). Aspartate 828, aspartate 830, asparagine 832, tyrosine 834, glutamate 839, aspartate 864, aspartate 866, asparagine 868, and glutamate 875 together coordinate Ca(2+). Residues 956-1248 (YISQDMICPS…GSFALIQLPR (293 aa)) form an interaction with TXNDC11 region. Residues 1045-1065 (IGCVAVFYAIAGGLFLERAYY) form a helical membrane-spanning segment. Topologically, residues 1066–1080 (YAFAAHHTGITDTTR) are extracellular. Residues 1081 to 1101 (VGIILSRGTAASISFMFSYIL) traverse the membrane as a helical segment. One can recognise a Ferric oxidoreductase domain in the interval 1087-1269 (RGTAASISFM…YGGDKLVSLS (183 aa)). The Cytoplasmic segment spans residues 1102–1148 (LTMCRNLITFLRETFLNRYVPFDAAVDFHRLIASTAIVLTVLHSVGH). Residues 1149-1171 (VVNVYLFSISPLSVLSCLFPGLF) traverse the membrane as a helical segment. The Extracellular segment spans residues 1172–1188 (HDDGSELPQKYYWWFFQ). A helical transmembrane segment spans residues 1189–1209 (TVPGLTGVVLLLILAIMYVFA). At 1210-1226 (SHHFRRRSFRGFWLTHH) the chain is on the cytoplasmic side. A helical transmembrane segment spans residues 1227–1247 (LYILLYVLLIIHGSFALIQLP). Position 1248 (arginine 1248) is a topological domain, extracellular. A helical membrane pass occupies residues 1249–1269 (FHIFFLVPAIIYGGDKLVSLS). The 107-residue stretch at 1270–1376 (RKKVEISVVK…DGPFGEGHQE (107 aa)) folds into the FAD-binding FR-type domain. Over 1270-1551 (RKKVEISVVK…THFSHHYENF (282 aa)) the chain is Cytoplasmic.

In the N-terminal section; belongs to the peroxidase family. As to quaternary structure, interacts with TXNDC11, TPO and CYBA. Post-translationally, N-glycosylated. As to expression, expressed in thyrocytes and tracheal surface epithelial cells (at protein level). Expressed in thyroid, trachea, bronchium, and to a lower extent, in placenta, testis, prostate, pancreas and heart.

Its subcellular location is the apical cell membrane. It carries out the reaction NADH + O2 + H(+) = H2O2 + NAD(+). The enzyme catalyses NADPH + O2 + H(+) = H2O2 + NADP(+). It participates in hormone biosynthesis; thyroid hormone biosynthesis. The NADPH oxidase activity is calcium-dependent. Peroxidase activity is inhibited by aminobenzohydrazide. Functionally, generates hydrogen peroxide which is required for the activity of thyroid peroxidase/TPO and lactoperoxidase/LPO. Plays a role in thyroid hormones synthesis and lactoperoxidase-mediated antimicrobial defense at the surface of mucosa. May have its own peroxidase activity through its N-terminal peroxidase-like domain. In Homo sapiens (Human), this protein is Dual oxidase 1 (DUOX1).